The chain runs to 932 residues: Protein translocase subunit SecA, chloroplastic (932 aa).

95-102 (MRTGEGKT) provides a ligand contact to ATP. Over residues 632-641 (HESRRVDNQL) the composition is skewed to basic and acidic residues. The disordered stretch occupies residues 632-653 (HESRRVDNQLRGRSGRQGDPGS).

The protein belongs to the SecA family.

It localises to the plastid. It is found in the chloroplast stroma. The protein localises to the chloroplast thylakoid membrane. The enzyme catalyses ATP + H2O + chloroplast-proteinSide 1 = ADP + phosphate + chloroplast-proteinSide 2.. Functionally, has a central role in coupling the hydrolysis of ATP to the transfer of proteins across the thylakoid membrane. In Ostreococcus lucimarinus (strain CCE9901), this protein is Protein translocase subunit SecA, chloroplastic.